The primary structure comprises 368 residues: Agmatine deiminase (368 aa).

The active-site Amidino-cysteine intermediate is Cys357.

This sequence belongs to the agmatine deiminase family. In terms of assembly, homodimer.

It catalyses the reaction agmatine + H2O = N-carbamoylputrescine + NH4(+). It participates in amine and polyamine biosynthesis; putrescine biosynthesis via agmatine pathway; N-carbamoylputrescine from agmatine: step 1/1. In terms of biological role, mediates the hydrolysis of agmatine into N-carbamoylputrescine in the arginine decarboxylase (ADC) pathway of putrescine biosynthesis, a basic polyamine. The sequence is that of Agmatine deiminase from Pseudomonas fluorescens (strain SBW25).